We begin with the raw amino-acid sequence, 426 residues long: MVPGVRIIPSLLGLVMFWLPLDSQARSRSGKVCLFGEKIYTPGQSWHPYLEPQGTIYCVRCTCSENGHVNCYRLRCPPLHCSQPVMEPQQCCPRCVDPHVPSGLRVPLKSCQLNETTYQHGEIFSAQELFPARLSNQCVLCSCIEGHTYCGLMTCPEPSCPTTLPLPDSCCQTCKDRTTESSTEENLTQLQHGERHSQDPCSERRGPSTPAPTSLSSPLGFIPRHFQSVGMGSTTIKIILKEKHKKACTHNGKTYSHGEVWHPTVLSFGPMPCILCTCIDGYQDCHRVTCPTQYPCSQPKKVAGKCCKICPEDEAEDDHSEVISTRCPKVPGQFHVYTLASPSPDSLHRFVLEHEASDQVEMYIWKLVKGIYHLVQIKRVRKQDFQKEAQNFRLLTGTHEGYWTVFLAQTPELKVTASPDKVTKTL.

The first 25 residues, 1 to 25 (MVPGVRIIPSLLGLVMFWLPLDSQA), serve as a signal peptide directing secretion. 2 VWFC domains span residues 31-96 (KVCL…PRCV) and 109-175 (KSCQ…QTCK). Asn-114 carries an N-linked (GlcNAc...) asparagine glycan. Ser-182 carries the post-translational modification Phosphoserine. The span at 182–191 (STEENLTQLQ) shows a compositional bias: polar residues. The interval 182 to 216 (STEENLTQLQHGERHSQDPCSERRGPSTPAPTSLS) is disordered. Residue Asn-186 is glycosylated (N-linked (GlcNAc...) asparagine). A compositionally biased stretch (basic and acidic residues) spans 192–206 (HGERHSQDPCSERRG). Positions 207–216 (PSTPAPTSLS) are enriched in low complexity. Residues 246-311 (KACTHNGKTY…VAGKCCKICP (66 aa)) form the VWFC 3 domain.

Interacts with GDF5. May interact with INHBA, BMP2, BMP4, BMP5, BMP6, and BMP7. In terms of tissue distribution, weakly expressed in the liver and kidney. In reproductive organs expressed in connective tissues such as ligaments of the ovary and oviduct in females, and of testis, epididymis and certain male accessory sex glands in males. Expression was high in uterine myometrium. Weakly expressed in cartilage of the femoral head, patella, articular facets of vertebrae, in the annulus fibrosus of intervertebral disks. In normal cartilage, expression was confined to articular chondrocytes especially in the superficial zone.

The protein localises to the secreted. Functionally, implicated in tumor angiogenesis. May inhibits BMPs activity by blocking their interaction with their receptors. Has a negative regulator effect on the cartilage formation/regeneration from immature mesenchymal cells, by preventing or reducing the rate of matrix accumulation. May play a role during myoblast and osteoblast differentiation, and maturation. The protein is Chordin-like protein 2 (Chrdl2) of Mus musculus (Mouse).